The primary structure comprises 26 residues: 83 kDa hypersensitivity protein (26 aa).

The disordered stretch occupies residues 1 to 26; it reads FTPEDFISAPRRGEAIPDPKGELAVF. Basic and acidic residues predominate over residues 11–26; the sequence is RRGEAIPDPKGELAVF.

This Trichophyton tonsurans (Scalp ringworm fungus) protein is 83 kDa hypersensitivity protein.